The sequence spans 308 residues: Coenzyme PQQ synthesis protein B (308 aa).

Belongs to the PqqB family.

Its pathway is cofactor biosynthesis; pyrroloquinoline quinone biosynthesis. May be involved in the transport of PQQ or its precursor to the periplasm. This chain is Coenzyme PQQ synthesis protein B, found in Klebsiella pneumoniae subsp. pneumoniae (strain ATCC 700721 / MGH 78578).